The primary structure comprises 174 residues: Co-chaperone protein HscB homolog (174 aa).

Positions Asn-2–Leu-74 constitute a J domain.

It belongs to the HscB family. Interacts with HscA and stimulates its ATPase activity.

Co-chaperone involved in the maturation of iron-sulfur cluster-containing proteins. Seems to help targeting proteins to be folded toward HscA. The polypeptide is Co-chaperone protein HscB homolog (Shewanella baltica (strain OS155 / ATCC BAA-1091)).